Here is a 321-residue protein sequence, read N- to C-terminus: Glucokinase (321 aa).

Residue 8 to 13 (GDVGGT) participates in ATP binding.

This sequence belongs to the bacterial glucokinase family.

It localises to the cytoplasm. It carries out the reaction D-glucose + ATP = D-glucose 6-phosphate + ADP + H(+). This is Glucokinase from Escherichia coli O127:H6 (strain E2348/69 / EPEC).